The sequence spans 983 residues: Probable beta-galactosidase C (983 aa).

A signal peptide spans 1 to 23 (MRIFSFLFLLLLGILTGQGLVSG). 5 residues coordinate substrate: Tyr82, Asn127, Ala128, Glu129, and Asn187. Glu188 functions as the Proton donor in the catalytic mechanism. Asn197 is a glycosylation site (N-linked (GlcNAc...) asparagine). Residue Tyr251 coordinates substrate. Cys257 and Cys304 form a disulfide bridge. Residue Asn276 is glycosylated (N-linked (GlcNAc...) asparagine). The active-site Nucleophile is the Glu287. Tyr353 serves as a coordination point for substrate. N-linked (GlcNAc...) asparagine glycans are attached at residues Asn391, Asn434, Asn466, Asn516, Asn601, Asn676, Asn714, Asn719, and Asn804.

The protein belongs to the glycosyl hydrolase 35 family.

The protein resides in the secreted. The catalysed reaction is Hydrolysis of terminal non-reducing beta-D-galactose residues in beta-D-galactosides.. Its function is as follows. Cleaves beta-linked terminal galactosyl residues from gangliosides, glycoproteins, and glycosaminoglycans. This chain is Probable beta-galactosidase C (lacC), found in Neosartorya fischeri (strain ATCC 1020 / DSM 3700 / CBS 544.65 / FGSC A1164 / JCM 1740 / NRRL 181 / WB 181) (Aspergillus fischerianus).